We begin with the raw amino-acid sequence, 410 residues long: Tegument protein VP16 homolog (410 aa).

A disordered region spans residues 388–410 (PPSPSEILPGDPPRPPTCGFLTR).

This sequence belongs to the herpesviridae tegument protein VP16 protein family. As to quaternary structure, associates with the VP16-induced complex; binding to host HCFC1 activates VP16 for association with the octamer motif-binding host protein POU2F1, to form a multiprotein-DNA complex responsible for activating transcription of the viral immediate early genes.

It localises to the virion tegument. Its subcellular location is the host nucleus. In terms of biological role, transcriptional activator of immediate-early (IE) gene products (alpha genes). Acts as a key activator of lytic infection by initiating the lytic program through the assembly of the transcriptional regulatory VP16-induced complex composed of VP16 and two cellular factors, HCFC1 and POU2F 1. VP16-induced complex represents a regulatory switch: when it is on, it promotes IE-gene expression and thus lytic infection, and when it is off, it limits IE-gene transcription favoring latent infection. May play a role in the aggregation of tegument proteins around nucleocapsids during virus morphogenesis. The sequence is that of Tegument protein VP16 homolog from Varicella-zoster virus (strain Oka vaccine) (HHV-3).